Reading from the N-terminus, the 357-residue chain is UDP-N-acetylglucosamine--N-acetylmuramyl-(pentapeptide) pyrophosphoryl-undecaprenol N-acetylglucosamine transferase (357 aa).

UDP-N-acetyl-alpha-D-glucosamine-binding positions include 13-15 (TGG), asparagine 125, arginine 161, serine 189, isoleucine 243, and glutamine 288.

The protein belongs to the glycosyltransferase 28 family. MurG subfamily.

The protein resides in the cell inner membrane. The catalysed reaction is di-trans,octa-cis-undecaprenyl diphospho-N-acetyl-alpha-D-muramoyl-L-alanyl-D-glutamyl-meso-2,6-diaminopimeloyl-D-alanyl-D-alanine + UDP-N-acetyl-alpha-D-glucosamine = di-trans,octa-cis-undecaprenyl diphospho-[N-acetyl-alpha-D-glucosaminyl-(1-&gt;4)]-N-acetyl-alpha-D-muramoyl-L-alanyl-D-glutamyl-meso-2,6-diaminopimeloyl-D-alanyl-D-alanine + UDP + H(+). The protein operates within cell wall biogenesis; peptidoglycan biosynthesis. Functionally, cell wall formation. Catalyzes the transfer of a GlcNAc subunit on undecaprenyl-pyrophosphoryl-MurNAc-pentapeptide (lipid intermediate I) to form undecaprenyl-pyrophosphoryl-MurNAc-(pentapeptide)GlcNAc (lipid intermediate II). This Bordetella parapertussis (strain 12822 / ATCC BAA-587 / NCTC 13253) protein is UDP-N-acetylglucosamine--N-acetylmuramyl-(pentapeptide) pyrophosphoryl-undecaprenol N-acetylglucosamine transferase.